The chain runs to 522 residues: Cytochrome P450 4F4 (522 aa).

2 consecutive transmembrane segments (helical) span residues 15–35 (TSLP…VRVL) and 87–107 (GFMT…PDVI). E328 and C468 together coordinate heme.

The protein belongs to the cytochrome P450 family. The cofactor is heme. As to expression, expressed in hepatocytes. High expression in liver and kidney. Lower expression in brain.

The protein localises to the endoplasmic reticulum membrane. It is found in the microsome membrane. It catalyses the reaction (5Z,8Z,11Z,14Z)-eicosatetraenoate + reduced [NADPH--hemoprotein reductase] + O2 = 20-hydroxy-(5Z,8Z,11Z,14Z)-eicosatetraenoate + oxidized [NADPH--hemoprotein reductase] + H2O + H(+). The enzyme catalyses leukotriene B4 + reduced [NADPH--hemoprotein reductase] + O2 = 20-hydroxy-leukotriene B4 + oxidized [NADPH--hemoprotein reductase] + H2O + H(+). The catalysed reaction is 6-trans-leukotriene B4 + reduced [NADPH--hemoprotein reductase] + O2 = 20-hydroxy-6-trans-leukotriene B4 + oxidized [NADPH--hemoprotein reductase] + H2O + H(+). It carries out the reaction prostaglandin A1 + reduced [NADPH--hemoprotein reductase] + O2 = 20-hydroxy prostaglandin A1 + oxidized [NADPH--hemoprotein reductase] + H2O + H(+). It catalyses the reaction prostaglandin E1 + reduced [NADPH--hemoprotein reductase] + O2 = 20-hydroxy prostaglandin E1 + oxidized [NADPH--hemoprotein reductase] + H2O + H(+). In terms of biological role, a cytochrome P450 monooxygenase involved in the metabolism of arachidonic acid and its oxygenated derivatives. Mechanistically, uses molecular oxygen inserting one oxygen atom into a substrate, and reducing the second into a water molecule, with two electrons provided by NADPH via cytochrome P450 reductase (CPR; NADPH-ferrihemoprotein reductase). Participates in the conversion of arachidonic acid to omega-hydroxyeicosatetraenoic acid (20-HETE), a signaling molecule acting both as vasoconstrictive and natriuretic with overall effect on arterial blood pressure. Hydroxylates the terminal carbon (omega-hydroxylation) of inflammatory lipid mediators, including prostaglandin (PG) A1, PGE1 and leukotriene B4 (LTB4), and may play a role in inactivation of these oxylipins during the resolution of inflammation. In Rattus norvegicus (Rat), this protein is Cytochrome P450 4F4.